The sequence spans 92 residues: UPF0298 protein ABC2380 (92 aa).

The protein belongs to the UPF0298 family.

Its subcellular location is the cytoplasm. In Shouchella clausii (strain KSM-K16) (Alkalihalobacillus clausii), this protein is UPF0298 protein ABC2380.